Consider the following 235-residue polypeptide: Regulator of G-protein signaling 9-binding protein (235 aa).

Over 1–210 (MAREECKALL…ERGGGCDPRK (210 aa)) the chain is Cytoplasmic. 2 coiled-coil regions span residues 29–54 (GSAD…AVST) and 144–169 (VADL…MKVN). Residues 153 to 200 (EVLQVGEMIDNMEMKVNVPRWTVQARQAAGAELLSTVSAGPSSVVSLQ) are SNARE-like. Residues 211–231 (ALAAILFGAVLLAAVALAVCV) form a helical; Anchor for type IV membrane protein membrane-spanning segment. Residues 232 to 235 (AKLS) are Extracellular-facing.

The protein belongs to the RGS7BP/RGS9BP family. Specifically interacts with isoform RGS9-1 of RGS9. Component of the RGS9-1-Gbeta5 complex composed of RGS9-1, Gbeta5 (GNB5) and RGS9BP.

It is found in the membrane. In terms of biological role, regulator of G protein-coupled receptor (GPCR) signaling in phototransduction. Participates in the recovery phase of visual transduction via its interaction with RGS9-1 isoform. Acts as a membrane-anchor that mediates the targeting of RGS9-1 to the photoreceptor outer segment, where phototransduction takes place. Enhances the ability of RGS9-1 to stimulate G protein GTPase activity, allowing the visual signal to be terminated on the physiologically time scale. It also controls the proteolytic stability of RGS9-1, probably by protecting it from degradation. The chain is Regulator of G-protein signaling 9-binding protein (RGS9BP) from Homo sapiens (Human).